A 179-amino-acid chain; its full sequence is Large ribosomal subunit protein uL5 (179 aa).

The protein belongs to the universal ribosomal protein uL5 family. Part of the 50S ribosomal subunit; contacts the 5S rRNA and probably tRNA. Forms a bridge to the 30S subunit in the 70S ribosome.

This is one of the proteins that bind and probably mediate the attachment of the 5S RNA into the large ribosomal subunit, where it forms part of the central protuberance. In the 70S ribosome it contacts protein S13 of the 30S subunit (bridge B1b), connecting the 2 subunits; this bridge is implicated in subunit movement. May contact the P site tRNA; the 5S rRNA and some of its associated proteins might help stabilize positioning of ribosome-bound tRNAs. The polypeptide is Large ribosomal subunit protein uL5 (Pyrobaculum aerophilum (strain ATCC 51768 / DSM 7523 / JCM 9630 / CIP 104966 / NBRC 100827 / IM2)).